We begin with the raw amino-acid sequence, 739 residues long: Phosphoribosylformylglycinamidine synthase subunit PurL (739 aa).

His53 is an active-site residue. 2 residues coordinate ATP: Tyr56 and Lys95. Glu97 contributes to the Mg(2+) binding site. Residues Ser98 to His101 and Arg120 each bind substrate. Residue His99 is the Proton acceptor of the active site. Asp121 provides a ligand contact to Mg(2+). Position 244 (Gln244) interacts with substrate. A Mg(2+)-binding site is contributed by Asp274. Residue Glu318–Gln320 participates in substrate binding. 2 residues coordinate ATP: Asp501 and Gly538. Mg(2+) is bound at residue Asn539. Ser541 contacts substrate.

This sequence belongs to the FGAMS family. As to quaternary structure, monomer. Part of the FGAM synthase complex composed of 1 PurL, 1 PurQ and 2 PurS subunits.

Its subcellular location is the cytoplasm. The enzyme catalyses N(2)-formyl-N(1)-(5-phospho-beta-D-ribosyl)glycinamide + L-glutamine + ATP + H2O = 2-formamido-N(1)-(5-O-phospho-beta-D-ribosyl)acetamidine + L-glutamate + ADP + phosphate + H(+). The protein operates within purine metabolism; IMP biosynthesis via de novo pathway; 5-amino-1-(5-phospho-D-ribosyl)imidazole from N(2)-formyl-N(1)-(5-phospho-D-ribosyl)glycinamide: step 1/2. Its function is as follows. Part of the phosphoribosylformylglycinamidine synthase complex involved in the purines biosynthetic pathway. Catalyzes the ATP-dependent conversion of formylglycinamide ribonucleotide (FGAR) and glutamine to yield formylglycinamidine ribonucleotide (FGAM) and glutamate. The FGAM synthase complex is composed of three subunits. PurQ produces an ammonia molecule by converting glutamine to glutamate. PurL transfers the ammonia molecule to FGAR to form FGAM in an ATP-dependent manner. PurS interacts with PurQ and PurL and is thought to assist in the transfer of the ammonia molecule from PurQ to PurL. This Listeria monocytogenes serotype 4b (strain CLIP80459) protein is Phosphoribosylformylglycinamidine synthase subunit PurL.